A 361-amino-acid chain; its full sequence is Trehalose 6-phosphate phosphatase RA3 (361 aa).

The protein belongs to the trehalose phosphatase family. The cofactor is a divalent metal cation. As to expression, expressed in axillary inflorescence meristems.

The catalysed reaction is alpha,alpha-trehalose 6-phosphate + H2O = alpha,alpha-trehalose + phosphate. Its pathway is glycan biosynthesis; trehalose biosynthesis. Functionally, removes the phosphate from trehalose 6-phosphate to produce free trehalose. Is specific for trehalose 6-phosphate. Does not possess activity toward glucose, sucrose or fructose 6-phosphates. Regulates inflorescence branching. Required to establish the correct identity and determinacy of axillary meristems in both male and female inflorescences. May act through a sugar signal that moves into axillary meristems. Acts upstream of RA1. May have a transcriptional regulatory function. This is Trehalose 6-phosphate phosphatase RA3 from Zea mays (Maize).